The sequence spans 215 residues: Uracil phosphoribosyltransferase (215 aa).

5-phospho-alpha-D-ribose 1-diphosphate is bound by residues Arg-77, Arg-102, and 129-137 (DPMLATGGS). Residues Ile-193 and 198 to 200 (GDA) contribute to the uracil site. Residue Asp-199 participates in 5-phospho-alpha-D-ribose 1-diphosphate binding.

The protein belongs to the UPRTase family. Mg(2+) is required as a cofactor.

It carries out the reaction UMP + diphosphate = 5-phospho-alpha-D-ribose 1-diphosphate + uracil. It participates in pyrimidine metabolism; UMP biosynthesis via salvage pathway; UMP from uracil: step 1/1. Allosterically activated by GTP. Its function is as follows. Catalyzes the conversion of uracil and 5-phospho-alpha-D-ribose 1-diphosphate (PRPP) to UMP and diphosphate. This is Uracil phosphoribosyltransferase from Corynebacterium urealyticum (strain ATCC 43042 / DSM 7109).